Consider the following 442-residue polypeptide: Exodeoxyribonuclease 7 large subunit (442 aa).

It belongs to the XseA family. In terms of assembly, heterooligomer composed of large and small subunits.

It is found in the cytoplasm. It carries out the reaction Exonucleolytic cleavage in either 5'- to 3'- or 3'- to 5'-direction to yield nucleoside 5'-phosphates.. Functionally, bidirectionally degrades single-stranded DNA into large acid-insoluble oligonucleotides, which are then degraded further into small acid-soluble oligonucleotides. The chain is Exodeoxyribonuclease 7 large subunit from Shewanella loihica (strain ATCC BAA-1088 / PV-4).